Reading from the N-terminus, the 162-residue chain is Precorrin-2 dehydrogenase (162 aa).

NAD(+)-binding positions include Ser-20–Ile-21 and Pro-41–Asp-42.

The protein belongs to the precorrin-2 dehydrogenase / sirohydrochlorin ferrochelatase family.

It catalyses the reaction precorrin-2 + NAD(+) = sirohydrochlorin + NADH + 2 H(+). It participates in cofactor biosynthesis; adenosylcobalamin biosynthesis; sirohydrochlorin from precorrin-2: step 1/1. It functions in the pathway porphyrin-containing compound metabolism; siroheme biosynthesis; sirohydrochlorin from precorrin-2: step 1/1. Catalyzes the dehydrogenation of precorrin-2 to form sirohydrochlorin which is used as a precursor in both siroheme biosynthesis and in the anaerobic branch of adenosylcobalamin biosynthesis. The chain is Precorrin-2 dehydrogenase (sirC) from Bacillus subtilis (strain 168).